The primary structure comprises 578 residues: Maltogenic alpha-amylase (578 aa).

This sequence belongs to the glycosyl hydrolase 13 family.

It carries out the reaction hydrolysis of (1-&gt;4)-alpha-D-glucosidic linkages in polysaccharides so as to remove successive alpha-maltose residues from the non-reducing ends of the chains.. Functionally, converts starch into maltose. In contrary to other maltogenic alpha-amylases BlmA cannot hydrolyze 1,4-alpha-glucosidic linkage next to 1,6-alpha-glucosidic linkages. This chain is Maltogenic alpha-amylase (blmA), found in Bacillus licheniformis.